The chain runs to 82 residues: Cytochrome b559 subunit alpha (82 aa).

Residues 22–36 form a helical membrane-spanning segment; sequence IIHAVTLPAIFIAGF. A heme-binding site is contributed by His-24.

Belongs to the PsbE/PsbF family. In terms of assembly, heterodimer of an alpha subunit and a beta subunit. PSII is composed of 1 copy each of membrane proteins PsbA, PsbB, PsbC, PsbD, PsbE, PsbF, PsbH, PsbI, PsbJ, PsbK, PsbL, PsbM, PsbT, PsbX, PsbY, Psb30/Ycf12, peripheral proteins PsbO, CyanoQ (PsbQ), PsbU, PsbV and a large number of cofactors. It forms dimeric complexes. It depends on heme b as a cofactor.

Its subcellular location is the cellular thylakoid membrane. Functionally, this b-type cytochrome is tightly associated with the reaction center of photosystem II (PSII). PSII is a light-driven water:plastoquinone oxidoreductase that uses light energy to abstract electrons from H(2)O, generating O(2) and a proton gradient subsequently used for ATP formation. It consists of a core antenna complex that captures photons, and an electron transfer chain that converts photonic excitation into a charge separation. This is Cytochrome b559 subunit alpha from Prochlorococcus marinus (strain MIT 9515).